The sequence spans 557 residues: CTP synthase (557 aa).

The segment at 1-267 is amidoligase domain; sequence MAKYIFVTGG…GAYLTQRLGL (267 aa). Serine 13 contributes to the CTP binding site. Serine 13 is a UTP binding site. 14–19 is an ATP binding site; sequence SVGKGI. Residue tyrosine 54 coordinates L-glutamine. Aspartate 71 is an ATP binding site. Mg(2+) contacts are provided by aspartate 71 and glutamate 141. CTP is bound by residues 148 to 150, 188 to 193, and lysine 224; these read DIE and KTKPTQ. UTP contacts are provided by residues 188 to 193 and lysine 224; that span reads KTKPTQ. In terms of domain architecture, Glutamine amidotransferase type-1 spans 292–535; the sequence is AIALVGKYVE…VAAAAKTFRE (244 aa). Glycine 354 serves as a coordination point for L-glutamine. The Nucleophile; for glutamine hydrolysis role is filled by cysteine 381. L-glutamine contacts are provided by residues 382–385, glutamate 406, and arginine 463; that span reads LGMQ. Active-site residues include histidine 508 and glutamate 510. Positions 536–557 are disordered; sequence GDQRPLPLEQNGAVTEHEPHSR.

This sequence belongs to the CTP synthase family. In terms of assembly, homotetramer.

The enzyme catalyses UTP + L-glutamine + ATP + H2O = CTP + L-glutamate + ADP + phosphate + 2 H(+). It catalyses the reaction L-glutamine + H2O = L-glutamate + NH4(+). The catalysed reaction is UTP + NH4(+) + ATP = CTP + ADP + phosphate + 2 H(+). Its pathway is pyrimidine metabolism; CTP biosynthesis via de novo pathway; CTP from UDP: step 2/2. Its activity is regulated as follows. Allosterically activated by GTP, when glutamine is the substrate; GTP has no effect on the reaction when ammonia is the substrate. The allosteric effector GTP functions by stabilizing the protein conformation that binds the tetrahedral intermediate(s) formed during glutamine hydrolysis. Inhibited by the product CTP, via allosteric rather than competitive inhibition. In terms of biological role, catalyzes the ATP-dependent amination of UTP to CTP with either L-glutamine or ammonia as the source of nitrogen. Regulates intracellular CTP levels through interactions with the four ribonucleotide triphosphates. The polypeptide is CTP synthase (Roseiflexus sp. (strain RS-1)).